Here is a 291-residue protein sequence, read N- to C-terminus: AMTDLLVSILVMPISIPYTITQTWSFGQLLCDIWLSSDITCCTASILHLCVIALDRYWAITDALEYSKRRTAGHAAAMIAIVWAISICISIPPLFWRQARAHEEISDCLVNTSQISYTIYSTCGAFYIPSLLLIILYGRIYRAARNRILNPPSLYGKRFTTAHLITGSAGSSLCSLNPSLHEGHSHSAGSPLFFNHVKIKLADSVLERKRISAARERKATKTLGIILGAFIICWLPFFVASLVLPICRDSCWIHPALFDFFTWLGYLNSLINPIIYTVFNEEFRQAFQKVV.

The chain crosses the membrane as a helical span at residues 30–54 (LCDIWLSSDITCCTASILHLCVIAL). A disulfide bridge connects residues Cys-31 and Cys-108. 2 residues coordinate serotonin: Asp-38 and Cys-42. The short motif at 55–57 (DRY) is the DRY motif; important for ligand-induced conformation changes element. Residues 75–96 (AAAMIAIVWAISICISIPPLFW) traverse the membrane as a helical segment. The N-linked (GlcNAc...) asparagine glycan is linked to Asn-111. The next 3 membrane-spanning stretches (helical) occupy residues 115-138 (ISYTIYSTCGAFYIPSLLLIILYG), 221-246 (KTLGIILGAFIICWLPFFVASLVLPI), and 256-279 (ALFDFFTWLGYLNSLINPIIYTVF). Ser-241 is a serotonin binding site. The NPxxY motif; important for ligand-induced conformation changes and signaling signature appears at 272-276 (NPIIY).

This sequence belongs to the G-protein coupled receptor 1 family. In terms of assembly, homodimer. Heterodimer with HTR1B.

It localises to the cell membrane. In terms of biological role, G-protein coupled receptor for 5-hydroxytryptamine (serotonin). Also functions as a receptor for ergot alkaloid derivatives, various anxiolytic and antidepressant drugs and other psychoactive substances. Ligand binding causes a conformation change that triggers signaling via guanine nucleotide-binding proteins (G proteins) and modulates the activity of downstream effectors, such as adenylate cyclase. HTR1D is coupled to G(i)/G(o) G alpha proteins and mediates inhibitory neurotransmission by inhibiting adenylate cyclase activity. Regulates the release of 5-hydroxytryptamine in the brain, and thereby affects neural activity. May also play a role in regulating the release of other neurotransmitters. May play a role in vasoconstriction. The chain is 5-hydroxytryptamine receptor 1D (HTR1D) from Sus scrofa (Pig).